Here is a 430-residue protein sequence, read N- to C-terminus: Mannosylglucosylglycerate synthase (430 aa).

Belongs to the glycosyltransferase group 1 family. It depends on a divalent metal cation as a cofactor.

The catalysed reaction is (2R)-2-O-(alpha-D-glucopyranosyl)-glycerate + GDP-alpha-D-mannose = (2R)-2-O-[alpha-D-mannopyranosyl-(1-&gt;2)-alpha-D-glucopyranosyl]-glycerate + GDP + H(+). In terms of biological role, involved in the biosynthesis of the compatible solute mannosylglucosylglycerate through a nonphosphorylating pathway. Catalyzes the synthesis of mannosylglucosylglycerate (MGG) from glucosylglycerate (GG) and GDP-mannose. This is Mannosylglucosylglycerate synthase from Petrotoga mobilis (strain DSM 10674 / SJ95).